The chain runs to 122 residues: Small ribosomal subunit protein uS13 (122 aa).

Residues 99–122 (RGQRTHTNARTRKGPAKAIAGKKK) form a disordered region.

It belongs to the universal ribosomal protein uS13 family. In terms of assembly, part of the 30S ribosomal subunit. Forms a loose heterodimer with protein S19. Forms two bridges to the 50S subunit in the 70S ribosome.

In terms of biological role, located at the top of the head of the 30S subunit, it contacts several helices of the 16S rRNA. In the 70S ribosome it contacts the 23S rRNA (bridge B1a) and protein L5 of the 50S subunit (bridge B1b), connecting the 2 subunits; these bridges are implicated in subunit movement. Contacts the tRNAs in the A and P-sites. This Rhodopseudomonas palustris (strain BisA53) protein is Small ribosomal subunit protein uS13.